The primary structure comprises 236 residues: 1-(5-phosphoribosyl)-5-[(5-phosphoribosylamino)methylideneamino] imidazole-4-carboxamide isomerase (236 aa).

Aspartate 8 serves as the catalytic Proton acceptor. The active-site Proton donor is aspartate 129.

This sequence belongs to the HisA/HisF family.

Its subcellular location is the cytoplasm. It carries out the reaction 1-(5-phospho-beta-D-ribosyl)-5-[(5-phospho-beta-D-ribosylamino)methylideneamino]imidazole-4-carboxamide = 5-[(5-phospho-1-deoxy-D-ribulos-1-ylimino)methylamino]-1-(5-phospho-beta-D-ribosyl)imidazole-4-carboxamide. It functions in the pathway amino-acid biosynthesis; L-histidine biosynthesis; L-histidine from 5-phospho-alpha-D-ribose 1-diphosphate: step 4/9. In Methanosphaerula palustris (strain ATCC BAA-1556 / DSM 19958 / E1-9c), this protein is 1-(5-phosphoribosyl)-5-[(5-phosphoribosylamino)methylideneamino] imidazole-4-carboxamide isomerase.